The chain runs to 125 residues: Large ribosomal subunit protein eL32 (125 aa).

This sequence belongs to the eukaryotic ribosomal protein eL32 family.

This is Large ribosomal subunit protein eL32 (rpl32e) from Sulfolobus acidocaldarius (strain ATCC 33909 / DSM 639 / JCM 8929 / NBRC 15157 / NCIMB 11770).